Reading from the N-terminus, the 204-residue chain is Large ribosomal subunit protein eL15z (204 aa).

Residues 161-204 (LRGLTSEGKKNRGLRGKGHNNHKNRPSRRATWKKNNSLSLRRYR) are disordered. The segment covering 171–192 (NRGLRGKGHNNHKNRPSRRATW) has biased composition (basic residues). A compositionally biased stretch (polar residues) spans 193 to 204 (KKNNSLSLRRYR).

It belongs to the eukaryotic ribosomal protein eL15 family.

The sequence is that of Large ribosomal subunit protein eL15z (RPL15A) from Arabidopsis thaliana (Mouse-ear cress).